Reading from the N-terminus, the 241-residue chain is Pyridoxine 5'-phosphate synthase (241 aa).

Asn7 contributes to the 3-amino-2-oxopropyl phosphate binding site. 1-deoxy-D-xylulose 5-phosphate is bound at residue 9–10 (DH). Position 18 (Arg18) interacts with 3-amino-2-oxopropyl phosphate. The Proton acceptor role is filled by His43. Residues Arg45 and His50 each coordinate 1-deoxy-D-xylulose 5-phosphate. The active-site Proton acceptor is the Glu70. 1-deoxy-D-xylulose 5-phosphate is bound at residue Thr100. Residue His191 is the Proton donor of the active site. Residues Gly192 and 213 to 214 (GH) contribute to the 3-amino-2-oxopropyl phosphate site.

The protein belongs to the PNP synthase family. In terms of assembly, homooctamer; tetramer of dimers.

It localises to the cytoplasm. It catalyses the reaction 3-amino-2-oxopropyl phosphate + 1-deoxy-D-xylulose 5-phosphate = pyridoxine 5'-phosphate + phosphate + 2 H2O + H(+). It participates in cofactor biosynthesis; pyridoxine 5'-phosphate biosynthesis; pyridoxine 5'-phosphate from D-erythrose 4-phosphate: step 5/5. Functionally, catalyzes the complicated ring closure reaction between the two acyclic compounds 1-deoxy-D-xylulose-5-phosphate (DXP) and 3-amino-2-oxopropyl phosphate (1-amino-acetone-3-phosphate or AAP) to form pyridoxine 5'-phosphate (PNP) and inorganic phosphate. This Nitratidesulfovibrio vulgaris (strain ATCC 29579 / DSM 644 / CCUG 34227 / NCIMB 8303 / VKM B-1760 / Hildenborough) (Desulfovibrio vulgaris) protein is Pyridoxine 5'-phosphate synthase.